The primary structure comprises 210 residues: Inner membrane-spanning protein YciB (210 aa).

The next 6 helical transmembrane spans lie at 12–32 (EVSP…FFFA), 53–73 (IFIA…ASWI), 78–98 (LPMM…LTLW), 115–135 (LFGA…GYVF), 148–168 (KLTI…EVIW), and 175–195 (FWVA…TLAQ).

The protein belongs to the YciB family.

Its subcellular location is the cell inner membrane. Plays a role in cell envelope biogenesis, maintenance of cell envelope integrity and membrane homeostasis. In Rhizobium meliloti (strain 1021) (Ensifer meliloti), this protein is Inner membrane-spanning protein YciB.